A 479-amino-acid chain; its full sequence is Kynurenine 3-monooxygenase (479 aa).

FAD contacts are provided by residues Val-19, 37–40, and Ala-57; that span reads YEAR. Arg-85 and Tyr-99 together coordinate L-kynurenine. FAD-binding positions include Arg-111, Leu-136, Thr-172, Asp-304, and 317-318; that span reads MN. L-kynurenine contacts are provided by Asn-363 and Tyr-398. Transmembrane regions (helical) follow at residues 385–404 and 425–445; these read FLHA…VAFT and GLFV…VHHL.

The protein belongs to the aromatic-ring hydroxylase family. KMO subfamily. It depends on FAD as a cofactor. In terms of tissue distribution, expressed by organs containing secondary lymphoid tissue, such as the lung, spleen, mesenteric lymph node, thymus and peripheral lymph nodes.

The protein localises to the mitochondrion outer membrane. The catalysed reaction is L-kynurenine + NADPH + O2 + H(+) = 3-hydroxy-L-kynurenine + NADP(+) + H2O. It participates in cofactor biosynthesis; NAD(+) biosynthesis; quinolinate from L-kynurenine: step 1/3. In terms of biological role, catalyzes the hydroxylation of L-kynurenine (L-Kyn) to form 3-hydroxy-L-kynurenine (L-3OHKyn). Required for synthesis of quinolinic acid, a neurotoxic NMDA receptor antagonist and potential endogenous inhibitor of NMDA receptor signaling in axonal targeting, synaptogenesis and apoptosis during brain development. Quinolinic acid may also affect NMDA receptor signaling in pancreatic beta cells, osteoblasts, myocardial cells, and the gastrointestinal tract. This chain is Kynurenine 3-monooxygenase, found in Mus musculus (Mouse).